Reading from the N-terminus, the 483-residue chain is Dual specificity protein phosphatase CDC14C (483 aa).

Positions 1–45 are disordered; sequence MKRKSEGRSSWAAATCSPCCSLTSPSVKKIRSPTQQDPRHRDPQD. The Nucleolar localization signal motif lies at 1 to 53; the sequence is MKRKSEGRSSWAAATCSPCCSLTSPSVKKIRSPTQQDPRHRDPQDDVYLDITD. Residues 12–26 are compositionally biased toward low complexity; sequence AAATCSPCCSLTSPS. Residues 43 to 197 are a; that stretch reads PQDDVYLDIT…AMQYGFLNFN (155 aa). Residues 198–211 form a linker region; it reads SFNLDEYEHYEKAE. The segment at 212-378 is b; that stretch reads NGDLNWIIPD…EGDYFCQKLK (167 aa). The 161-residue stretch at 213 to 373 folds into the Tyrosine-protein phosphatase domain; it reads GDLNWIIPDR…TSLWLEGDYF (161 aa). The active-site Phosphocysteine intermediate is Cys-313. The disordered stretch occupies residues 407-426; that stretch reads QDQQEPEPYSDDDEINGGTQ. The span at 408-421 shows a compositional bias: acidic residues; that stretch reads DQQEPEPYSDDDEI. The helical transmembrane segment at 444–466 threads the bilayer; that stretch reads ILLTCPLAVLTSALCSVVIWWIV.

Belongs to the protein-tyrosine phosphatase family. Non-receptor class CDC14 subfamily.

The protein resides in the membrane. Its subcellular location is the nucleus. The protein localises to the nucleolus. It localises to the cytoplasm. It is found in the cytoskeleton. It catalyses the reaction O-phospho-L-tyrosyl-[protein] + H2O = L-tyrosyl-[protein] + phosphate. The catalysed reaction is O-phospho-L-seryl-[protein] + H2O = L-seryl-[protein] + phosphate. The enzyme catalyses O-phospho-L-threonyl-[protein] + H2O = L-threonyl-[protein] + phosphate. Dual-specificity phosphatase. Preferentially dephosphorylates proteins modified by proline-directed kinases. The polypeptide is Dual specificity protein phosphatase CDC14C (Symphalangus syndactylus (Siamang)).